The sequence spans 611 residues: MADKLTRVAIVNSDKCKPKKCRQECKKSCPVVRSGKLCIEVTPESRIAFISEQLCIGCGICPKRCPFGAITIINLPTNLESMITHRYAANSFKLHRLPMPRPGSVLGLVGTNGIGKSTALKILSGKLKPNLGRYDNPPDWEEVIKYFRGSELQNYFTKILEDDLRAVVKPQYVDQIPKAVRTPDKTVKFLIESRKSMDNLDEVLDTLELRHIYDRDVTHLSGGELQRFAIGTVCVQKADVYMFDEPSSYLDVKQRLAAARIIRSLLRPDDYVIVVEHDLSVLDYLSDYVCVLYGQPAVYGVVTLPHSVREGINIFLDGHIPTENLRFREESLTFRMVEGTEDFVAEKSRAFKYPAMEKTLGNFKLRVDAGSFSDSEIIVMMGENGTGKTTFCRLLAGVLKPDGTTRVPEMRISMKPQTITPKFEGTVRQLFFKKIKAAFLSPQFQTDVVKPLKLDDFIDQEVKNLSGGELQRVAIVLALGIPADIYVIDEPSAYLDSEQRIVASRVIKRFIMHAKKTAFIVEHDFIMATYLADRVIVFDGKPGIDAHANKPESLLTGCNTFLKNLDVTFRRDPTNFRPRINKLNSQLDQEQKLSGNYFFLEEGPDKEKERS.

4Fe-4S ferredoxin-type domains follow at residues 7 to 31 (RVAI…SCPV) and 46 to 75 (RIAF…IINL). 2 ABC transporter domains span residues 77–318 (TNLE…FLDG) and 345–565 (AEKS…LKNL). Residues 110 to 117 (GTNGIGKS) and 382 to 389 (GENGTGKT) contribute to the ATP site.

It belongs to the ABC transporter superfamily. ABCE family. In terms of assembly, component of the multifactor complex (MFC). The complex associates with pre-initiation complexes.

The protein localises to the cytoplasm. The protein resides in the nucleus. Its function is as follows. Component of the multifactor complex (MFC) involved in translation initiation. Required for the binding of MFC to the 40S ribosome. Required for the processing and nuclear export of the 60S and 40S ribosomal subunits. In Chaetomium thermophilum (strain DSM 1495 / CBS 144.50 / IMI 039719) (Thermochaetoides thermophila), this protein is Translation initiation factor RLI1 (RLI1).